The following is a 90-amino-acid chain: Cuticle protein 9.5 (90 aa).

In terms of biological role, component of the cuticle of migratory locust which contains more than 100 different structural proteins. The protein is Cuticle protein 9.5 of Locusta migratoria (Migratory locust).